A 267-amino-acid polypeptide reads, in one-letter code: Phosphate import ATP-binding protein PstB 2 (267 aa).

An ABC transporter domain is found at 21 to 262 (LTTKDLHVYY…AKCQSTSDYV (242 aa)). Residue 53 to 60 (GPSGCGKS) coordinates ATP.

This sequence belongs to the ABC transporter superfamily. Phosphate importer (TC 3.A.1.7) family. The complex is composed of two ATP-binding proteins (PstB), two transmembrane proteins (PstC and PstA) and a solute-binding protein (PstS).

It localises to the cell membrane. The enzyme catalyses phosphate(out) + ATP + H2O = ADP + 2 phosphate(in) + H(+). Functionally, part of the ABC transporter complex PstSACB involved in phosphate import. Responsible for energy coupling to the transport system. The sequence is that of Phosphate import ATP-binding protein PstB 2 from Streptococcus agalactiae serotype Ia (strain ATCC 27591 / A909 / CDC SS700).